The chain runs to 384 residues: Galactokinase (384 aa).

34 to 37 (EHTD) contributes to the substrate binding site. 123-129 (SSGLSSS) lines the ATP pocket. Mg(2+) is bound by residues Ser-129 and Glu-161. Asp-173 (proton acceptor) is an active-site residue. Substrate is bound at residue Tyr-222.

The protein belongs to the GHMP kinase family. GalK subfamily.

It is found in the cytoplasm. The catalysed reaction is alpha-D-galactose + ATP = alpha-D-galactose 1-phosphate + ADP + H(+). It functions in the pathway carbohydrate metabolism; galactose metabolism. Its function is as follows. Catalyzes the transfer of the gamma-phosphate of ATP to D-galactose to form alpha-D-galactose-1-phosphate (Gal-1-P). This is Galactokinase from Haemophilus influenzae (strain PittEE).